The sequence spans 52 residues: Light-harvesting protein B-870 alpha chain (52 aa).

At 1-15 the chain is on the cytoplasmic side; it reads MAKFYKIWLIFDPRR. Residues 16 to 36 traverse the membrane as a helical segment; the sequence is VFVAQGVFLFLLAAMIHLVVL. His-32 provides a ligand contact to a bacteriochlorophyll. The Periplasmic portion of the chain corresponds to 37–52; sequence SSGLNWFEAAAAVGGQ.

Belongs to the antenna complex alpha subunit family. The core complex is formed by different alpha and beta chains, binding bacteriochlorophyll molecules, and arranged most probably in tetrameric structures disposed around the reaction center. The non-pigmented gamma chains may constitute additional components.

The protein resides in the cell inner membrane. In terms of biological role, antenna complexes are light-harvesting systems, which transfer the excitation energy to the reaction centers. The polypeptide is Light-harvesting protein B-870 alpha chain (pufA) (Roseobacter denitrificans (strain ATCC 33942 / OCh 114) (Erythrobacter sp. (strain OCh 114))).